Here is a 355-residue protein sequence, read N- to C-terminus: Guanine nucleotide-binding protein G(z) subunit alpha (355 aa).

Over residues methionine 1–arginine 14 the composition is skewed to basic and acidic residues. Residues methionine 1 to glutamate 26 form a disordered region. Glycine 2 carries N-myristoyl glycine lipidation. A lipid anchor (S-palmitoyl cysteine) is attached at cysteine 3. The G-alpha domain occupies arginine 32–cysteine 355. Residues lysine 35–threonine 48 form a G1 motif region. GTP contacts are provided by residues glycine 40–serine 47, leucine 176–threonine 182, aspartate 201–glutamine 205, asparagine 270–aspartate 273, and alanine 327. The Mg(2+) site is built by serine 47 and threonine 182. The tract at residues aspartate 174–threonine 182 is G2 motif. The segment at phenylalanine 197 to arginine 206 is G3 motif. Residues isoleucine 266–aspartate 273 form a G4 motif region. Residues threonine 325 to threonine 330 are G5 motif.

It belongs to the G-alpha family. G(i/o/t/z) subfamily. As to quaternary structure, G-proteins are composed of 3 units; alpha, beta and gamma. The alpha chain contains the guanine nucleotide binding site. Interacts with ADGRB2.

It localises to the membrane. Guanine nucleotide-binding proteins (G proteins) are involved as modulators or transducers in various transmembrane signaling systems. In Rattus norvegicus (Rat), this protein is Guanine nucleotide-binding protein G(z) subunit alpha (Gnaz).